We begin with the raw amino-acid sequence, 654 residues long: U-box domain-containing protein 12 (654 aa).

The region spanning 255 to 329 (IPPEEFRCPI…AQWCESNGIE (75 aa)) is the U-box domain. The tract at residues 329–352 (EPPKRPNISQPSSKASSSSSAPDD) is disordered. Residues 337–349 (SQPSSKASSSSSA) show a composition bias toward low complexity. 5 ARM repeats span residues 387–427 (NHNR…NLSI), 430–469 (ENKGKIVYSSGAVPGIVHVLQKGSMEARENAAATLFSLSV), 471–510 (DENKVTIGAAGAIPPLVTLLSEGSQRGKKDAATALFNLCI), 512–551 (QGNKGKAVRAGLVPVLMRLLTEPESGMVDESLSILAILSS), and 553–592 (PDGKSEVGAADAVPVLVDFIRSGSPRNKENSAAVLVHLCS).

It catalyses the reaction S-ubiquitinyl-[E2 ubiquitin-conjugating enzyme]-L-cysteine + [acceptor protein]-L-lysine = [E2 ubiquitin-conjugating enzyme]-L-cysteine + N(6)-ubiquitinyl-[acceptor protein]-L-lysine.. It functions in the pathway protein modification; protein ubiquitination. In terms of biological role, functions as an E3 ubiquitin ligase. The sequence is that of U-box domain-containing protein 12 (PUB12) from Arabidopsis thaliana (Mouse-ear cress).